A 1269-amino-acid chain; its full sequence is DNA-directed RNA polymerase subunit beta'' (1269 aa).

4 residues coordinate Zn(2+): Cys226, Cys301, Cys308, and Cys311.

This sequence belongs to the RNA polymerase beta' chain family. RpoC2 subfamily. As to quaternary structure, in plastids the minimal PEP RNA polymerase catalytic core is composed of four subunits: alpha, beta, beta', and beta''. When a (nuclear-encoded) sigma factor is associated with the core the holoenzyme is formed, which can initiate transcription. Zn(2+) serves as cofactor.

The protein resides in the plastid. Its subcellular location is the chloroplast. It catalyses the reaction RNA(n) + a ribonucleoside 5'-triphosphate = RNA(n+1) + diphosphate. Functionally, DNA-dependent RNA polymerase catalyzes the transcription of DNA into RNA using the four ribonucleoside triphosphates as substrates. The chain is DNA-directed RNA polymerase subunit beta'' from Cyanidium caldarium (Red alga).